The chain runs to 256 residues: Imidazole glycerol phosphate synthase subunit HisF (256 aa).

Catalysis depends on residues D12 and D131.

It belongs to the HisA/HisF family. Heterodimer of HisH and HisF.

The protein localises to the cytoplasm. The catalysed reaction is 5-[(5-phospho-1-deoxy-D-ribulos-1-ylimino)methylamino]-1-(5-phospho-beta-D-ribosyl)imidazole-4-carboxamide + L-glutamine = D-erythro-1-(imidazol-4-yl)glycerol 3-phosphate + 5-amino-1-(5-phospho-beta-D-ribosyl)imidazole-4-carboxamide + L-glutamate + H(+). It functions in the pathway amino-acid biosynthesis; L-histidine biosynthesis; L-histidine from 5-phospho-alpha-D-ribose 1-diphosphate: step 5/9. In terms of biological role, IGPS catalyzes the conversion of PRFAR and glutamine to IGP, AICAR and glutamate. The HisF subunit catalyzes the cyclization activity that produces IGP and AICAR from PRFAR using the ammonia provided by the HisH subunit. This is Imidazole glycerol phosphate synthase subunit HisF from Pseudomonas entomophila (strain L48).